Reading from the N-terminus, the 463-residue chain is Carnosine N-methyltransferase (463 aa).

2 disordered regions span residues 1–64 and 79–104; these read MTKN…SQLK and KHNH…EKEE. Residues 9–58 show a composition bias toward low complexity; sequence KSNNSNISNNNNNNNNNNNNNNNNNNNNNNNNNNNNNNNNNNNNNNNNKN. The segment covering 79 to 93 has biased composition (basic and acidic residues); that stretch reads KHNHDHSHDHNHDYD. Residues 94 to 103 show a composition bias toward acidic residues; the sequence is DNNEDDEEKE. Q215, R218, G260, E281, D351, F352, and C367 together coordinate S-adenosyl-L-methionine. D371 contacts carnosine. Y379 serves as a coordination point for S-adenosyl-L-methionine. Residues H402 and Y450 each contribute to the carnosine site.

It belongs to the carnosine N-methyltransferase family.

The enzyme catalyses carnosine + S-adenosyl-L-methionine = anserine + S-adenosyl-L-homocysteine + H(+). Its function is as follows. N-methyltransferase that mediates the formation of anserine (beta-alanyl-N(Pi)-methyl-L-histidine) from carnosine. This Dictyostelium discoideum (Social amoeba) protein is Carnosine N-methyltransferase.